The primary structure comprises 790 residues: Cadherin-18 (790 aa).

The N-terminal stretch at 1–24 is a signal peptide; that stretch reads MKITSTSCICPVLVCLCFVQRCYG. Residues 25 to 53 constitute a propeptide that is removed on maturation; sequence TAHHSSIKVMRNQTKHIEGETEVHHRPKR. A glycan (N-linked (GlcNAc...) asparagine) is linked at Asn-36. Cadherin domains are found at residues 54–159, 160–268, 269–383, 384–486, and 487–608; these read GWVW…APKF, TDGP…PPRF, PQKH…PPLF, SMPS…DNPP, and ELAR…FLSS. Over 54–608 the chain is Extracellular; sequence GWVWNQFFVL…TCHAEAFLSS (555 aa). An N-linked (GlcNAc...) asparagine glycan is attached at Asn-255. N-linked (GlcNAc...) asparagine glycans are attached at residues Asn-455 and Asn-536. The chain crosses the membrane as a helical span at residues 609 to 636; it reads AGLSTGALIAILLCVLILLAIVVLFITL. Topologically, residues 637–790 are cytoplasmic; that stretch reads RRSKKEPLII…YGEIESERTT (154 aa). Ser-786 carries the phosphoserine modification.

The protein localises to the cell membrane. In terms of biological role, cadherins are calcium-dependent cell adhesion proteins. They preferentially interact with themselves in a homophilic manner in connecting cells; cadherins may thus contribute to the sorting of heterogeneous cell types. This chain is Cadherin-18 (CDH18), found in Homo sapiens (Human).